The primary structure comprises 239 residues: MLMSKYKRILLKLSGEALANTENIIDPVALNKVVNIIKSVLSQNVEIAIVVGGGNIFRGAVLAQAGMNRITGDHMGMLATVMNALAIADVCQKNKVDTLVMSGFSIGGGVCDSINHVHAKQALNEGKVVIFCAGTGSPCFTTDTGAALRAIEIDADAVFKATKVDGIYTSDPIKNSDAKRYDSLSFDGAIEKNLQIMDVSAFALCREHDLEICVFSMLENTNTLSDILKGKPLGTIVRK.

ATP is bound at residue 12-15; sequence KLSG. Residue Gly-53 coordinates UMP. 2 residues coordinate ATP: Gly-54 and Arg-58. UMP-binding positions include Asp-73 and 135–142; that span reads TGSPCFTT. 3 residues coordinate ATP: Thr-162, Tyr-168, and Asp-171.

The protein belongs to the UMP kinase family. In terms of assembly, homohexamer.

It localises to the cytoplasm. It carries out the reaction UMP + ATP = UDP + ADP. Its pathway is pyrimidine metabolism; CTP biosynthesis via de novo pathway; UDP from UMP (UMPK route): step 1/1. Its activity is regulated as follows. Inhibited by UTP. Functionally, catalyzes the reversible phosphorylation of UMP to UDP. The polypeptide is Uridylate kinase (Ruthia magnifica subsp. Calyptogena magnifica).